The sequence spans 324 residues: Probable WRKY transcription factor 53 (324 aa).

Residues 93–126 are disordered; the sequence is NPGSVPESPASINGSPRSEEFADGGGSSESHHRQ. The WRKY DNA-binding region spans 152-220; the sequence is GLEGPQDDVF…YRGTHTCSQA (69 aa).

This sequence belongs to the WRKY group III family. In terms of assembly, interacts with ESR/ESP and UPL5. Binds to WRKY30. Ubiquitinated by UPL5. Ubiquitination leads to its subsequent degradation, thus controlling the timing of leaf senescence.

It localises to the nucleus. Transcription factor. Interacts specifically with the W box (5'-(T)TGAC[CT]-3'), a frequently occurring elicitor-responsive cis-acting element. May regulate the early events of leaf senescence. Negatively regulates the expression of ESR/ESP. Together with WRKY46 and WRKY70, promotes resistance to P.syringae, probably by enhancing salicylic acid (SA)- dependent genes. Contributes to the suppression of jasmonic acid (MeJA)-induced expression of PDF1.2. This is Probable WRKY transcription factor 53 from Arabidopsis thaliana (Mouse-ear cress).